A 439-amino-acid polypeptide reads, in one-letter code: Cytochrome b-c1 complex reductase subunit, mitochondrial (439 aa).

The transit peptide at 1 to 17 directs the protein to the mitochondrion; that stretch reads MIRGSSALKSLTSRRLY.

It belongs to the peptidase M16 family. UQCRC1/QCR1 subfamily. In terms of assembly, component of the ubiquinol-cytochrome c oxidoreductase (cytochrome b-c1 complex, complex III, CIII), a multisubunit enzyme composed of 10 subunits. The complex is composed of 3 respiratory subunits cytochrome b (COB), cytochrome c1 (CYT1) and Rieske protein (RIP1), 2 core protein subunits COR1 and QCR2, and 5 low-molecular weight protein subunits QCR6, QCR7, QCR8, QCR9 and QCR10. The complex exists as an obligatory dimer and forms supercomplexes (SCs) in the inner mitochondrial membrane with a monomer or a dimer of cytochrome c oxidase (complex IV, CIV), resulting in 2 different assemblies (supercomplexes III(2)IV and III(2)IV(2)).

It is found in the mitochondrion inner membrane. Component of the ubiquinol-cytochrome c oxidoreductase, a multisubunit transmembrane complex that is part of the mitochondrial electron transport chain which drives oxidative phosphorylation. The complex plays an important role in the uptake of multiple carbon sources present in different host niches. The sequence is that of Cytochrome b-c1 complex reductase subunit, mitochondrial from Candida albicans (strain SC5314 / ATCC MYA-2876) (Yeast).